We begin with the raw amino-acid sequence, 1165 residues long: Protein hsr-9 (1165 aa).

4 disordered regions span residues 1-26, 70-578, 608-713, and 874-913; these read MASS…PTTT, AEDE…TEME, KYSM…IPLK, and TRAR…EEEE. Positions 16 to 26 are enriched in low complexity; that stretch reads TVTQTSLPTTT. Basic and acidic residues-rich tracts occupy residues 98–114, 123–140, and 149–162; these read KDAK…KSES, TFEK…KLDI, and DTEK…KVVG. Acidic residues-rich tracts occupy residues 163-179, 211-230, and 280-289; these read DEDE…DEDE, EKEE…EVEV, and GESEANEENQ. Residues 306–317 show a composition bias toward polar residues; sequence ATVSSTPSSNTP. Basic and acidic residues predominate over residues 397–408; sequence NTEHPTEEETPK. A compositionally biased stretch (low complexity) spans 415–431; that stretch reads SAASSSATSSAVPTPRS. Positions 446-461 are enriched in basic and acidic residues; it reads LQEKETEDPTKTHDTN. The segment covering 533-543 has biased composition (acidic residues); the sequence is DPIEEADETIE. Over residues 554 to 563 the composition is skewed to low complexity; that stretch reads AAKSAPSSSK. Composition is skewed to basic and acidic residues over residues 662 to 671 and 694 to 708; these read KKEEEHHEND and SEAS…KKEP. A BRCT domain is found at 923-1028; that stretch reads IGKNIFTGKV…KCVDYTDYVL (106 aa).

Expressed in germ cells.

It is found in the nucleus. May have a role in DNA double-strand break repair following gamma-irradiation. This chain is Protein hsr-9, found in Caenorhabditis elegans.